Here is a 705-residue protein sequence, read N- to C-terminus: MAKKPSAPNNTKPATIHDQKATRGNGGELHQIAEGDTPVLTTAQGGPVADDQNSLRAGERGPTLIEDFHFREKIFHFDHERIPERVVHARGYGVHGFFETYESLAAYTRADLFQRPGERTPAFVRFSTVAGSKGSFDLARDVRGFAVKIYTKEGNWDLVGNNIPVFFIQDAIKFPDVIHSVKPEPDREFPQAQSAHDNFWDFISLTPESMHMIMWVMSDRAIPRSFRFMEGFGVHTFRFVNAKDESTFVKFHWKPKLGLQSVVWNEAVKINGADPDFHRRDMWQAIQSGNFPEWDLHVQLFDQDFADKFDFDILDPTKIIPEEVLPTKPVGRLVLDRMPENFFAETEQVAFMTQNVPPGIDFSDDPLLQGRNFSYLDTQLKRLGSPNFTHLPINAPKCPFQHFQQDGHMAMRNPVGRVNYQPNSWGEGPRESPMKGFRHFPSEEQGPKLRIRAESFADHYSQARQFFISQTPPEQRHIADALTFELSKVETPVIRERMVAHLLNIDETLGKKVGHALGLETMPKPADAAVATRQDLDPSPALSIIQRGPKRFEGRKLGILATDGADGALLDALIAAVEKEKAAFELIAPKVGGFTASDGKRIAAHQMLDGGPSVLYDAVVLLPSAEAVTDLIDVATARDFVADAFAHCKYIGYAGAAVPLLERAGIAELLDEGTIELTDAASAAAFLTEIGKLRVWGREPSVKLK.

The segment at 1 to 31 (MAKKPSAPNNTKPATIHDQKATRGNGGELHQ) is disordered. Catalysis depends on residues His-88 and Asn-161. Tyr-375 is a heme binding site.

The protein belongs to the catalase family. HPII subfamily. Heme is required as a cofactor.

It catalyses the reaction 2 H2O2 = O2 + 2 H2O. Functionally, decomposes hydrogen peroxide into water and oxygen; serves to protect cells from the toxic effects of hydrogen peroxide. Could protect cells in nodules which have a high potential to produce hydrogen peroxide because of the strong reducing conditions required for nitrogen fixation and the action of several proteins. The sequence is that of Catalase C (katE) from Rhizobium meliloti (strain 1021) (Ensifer meliloti).